The following is a 252-amino-acid chain: MTNWKPLVSVITPSYNARDYIEDTVHSVLDQSHPHWEMIIVDDCSTDGTRDILQQYEKIDERIHVVYLEENSGAAVARNKALERAQGRYVAFLDSDDKWKKDKLEKQLEFMMERSCAFSFTGYSLMAQDGTPLDKFIHAPESLTYDDALKNTIIGCLTVMIDREQTGQIQMPNIRTRQDLATWLSLLKKGFTAYGMNECLAEYRLVNNSISSNKWKAAKKTWFVYREIERLHFMKATWCFVQYAKNAVKKRL.

It belongs to the glycosyltransferase 2 family.

The protein operates within cell wall biogenesis; teichuronic acid biosynthesis. In Bacillus subtilis (strain 168), this protein is Putative teichuronic acid biosynthesis glycosyltransferase TuaG (tuaG).